A 226-amino-acid chain; its full sequence is Transcriptional regulatory protein PcoR (226 aa).

The region spanning 3–117 (RILIVEDEQK…ELVARVRTLL (115 aa)) is the Response regulatory domain. A 4-aspartylphosphate modification is found at Asp-52. The segment at residues 125-223 (ATVCTIADMT…VRGAGYVLEI (99 aa)) is a DNA-binding region (ompR/PhoB-type).

Post-translationally, phosphorylated by PcoS.

Its subcellular location is the cytoplasm. In terms of biological role, probable member of a two-component regulatory system PcoS/PcoR. May be involved in the activation of copper resistance gene operon pcoABCD by binding to a specific site on the cop operon promoter (copper box). The polypeptide is Transcriptional regulatory protein PcoR (pcoR) (Escherichia coli).